The primary structure comprises 459 residues: Exodeoxyribonuclease 7 large subunit (459 aa).

The protein belongs to the XseA family. As to quaternary structure, heterooligomer composed of large and small subunits.

Its subcellular location is the cytoplasm. The enzyme catalyses Exonucleolytic cleavage in either 5'- to 3'- or 3'- to 5'-direction to yield nucleoside 5'-phosphates.. Functionally, bidirectionally degrades single-stranded DNA into large acid-insoluble oligonucleotides, which are then degraded further into small acid-soluble oligonucleotides. The polypeptide is Exodeoxyribonuclease 7 large subunit (Yersinia pseudotuberculosis serotype IB (strain PB1/+)).